The primary structure comprises 230 residues: 5'-methylthioadenosine/S-adenosylhomocysteine nucleosidase (230 aa).

Catalysis depends on Glu-12, which acts as the Proton acceptor. Substrate contacts are provided by residues Gly-78, Ile-153, and 174–175 (ME). Asp-198 serves as the catalytic Proton donor.

It belongs to the PNP/UDP phosphorylase family. MtnN subfamily.

It catalyses the reaction S-adenosyl-L-homocysteine + H2O = S-(5-deoxy-D-ribos-5-yl)-L-homocysteine + adenine. The catalysed reaction is S-methyl-5'-thioadenosine + H2O = 5-(methylsulfanyl)-D-ribose + adenine. It carries out the reaction 5'-deoxyadenosine + H2O = 5-deoxy-D-ribose + adenine. Its pathway is amino-acid biosynthesis; L-methionine biosynthesis via salvage pathway; S-methyl-5-thio-alpha-D-ribose 1-phosphate from S-methyl-5'-thioadenosine (hydrolase route): step 1/2. Catalyzes the irreversible cleavage of the glycosidic bond in both 5'-methylthioadenosine (MTA) and S-adenosylhomocysteine (SAH/AdoHcy) to adenine and the corresponding thioribose, 5'-methylthioribose and S-ribosylhomocysteine, respectively. Also cleaves 5'-deoxyadenosine, a toxic by-product of radical S-adenosylmethionine (SAM) enzymes, into 5-deoxyribose and adenine. This Shewanella piezotolerans (strain WP3 / JCM 13877) protein is 5'-methylthioadenosine/S-adenosylhomocysteine nucleosidase.